A 379-amino-acid chain; its full sequence is Stimulator of interferon genes protein (379 aa).

Helical transmembrane passes span 20 to 40, 87 to 107, and 115 to 135; these read VAAFVLLIVCLAALWKLGEPS, ACLGCPIRYGAVLLLSCYFYV, and LPLTWMLAHLGLSEALNILLG. S-palmitoyl cysteine attachment occurs at residues cysteine 88 and cysteine 91. The tract at residues 153–340 is cyclic dinucleotide-binding domain (CBD); it reads FNVAHGLAWS…KHLRQEEREE (188 aa). 2',3'-cGAMP contacts are provided by serine 162, tyrosine 167, arginine 238, and threonine 263. 3',3'-c-di-GMP contacts are provided by residues serine 162, tyrosine 167, 238 to 241, and threonine 263; that span reads RVYT. 2',3'-cUAMP-binding residues include tyrosine 167, arginine 238, and threonine 263. Positions 340–379 are C-terminal tail (CTT); the sequence is EVTMGTAGTFVAPGSSTLHQEPELLISGMDQPLPLRTDIF. Serine 355 bears the Phosphoserine mark. Position 356 is a phosphothreonine (threonine 356). Residues 363–366 carry the pLxIS motif motif; that stretch reads LLIS. Serine 366 is modified (phosphoserine; by TBK1).

Belongs to the STING family. As to quaternary structure, homodimer; forms a homodimer in absence of cyclic nucleotide (c-di-GMP or cGAMP). Homotetramer; in presence of cyclic nucleotide (c-di-GMP or cGAMP), forms tetramers and higher-order oligomers through side-by-side packing. Interacts (when phosphorylated) with IRF3; following activation and phosphorylation on the pLxIS motif by TBK1, recruits IRF3. Interacts with TBK1; when homodimer, leading to subsequent production of IFN-beta. Interacts (via transmembrane domain) with TMEM203. Post-translationally, phosphorylation by TBK1 leads to activation and production of IFN-beta. Following cyclic nucleotide (c-di-GMP or cGAMP)-binding, activation and translocation from the endoplasmic reticulum, STING1 is phosphorylated by TBK1 at Ser-366 in the pLxIS motif. The phosphorylated pLxIS motif constitutes an IRF3-binding motif, leading to recruitment of the transcription factor IRF3 to induce type-I interferons and other cytokines. In contrast, lacks phosphorylation site at position 358, leading to reduced production of type-I interferons and other cytokines.

The protein localises to the endoplasmic reticulum membrane. The protein resides in the cytoplasm. Its subcellular location is the perinuclear region. It is found in the endoplasmic reticulum-Golgi intermediate compartment membrane. It localises to the golgi apparatus membrane. The protein localises to the cytoplasmic vesicle. The protein resides in the autophagosome membrane. Its subcellular location is the mitochondrion outer membrane. It is found in the cell membrane. It catalyses the reaction H(+)(in) = H(+)(out). Its function is as follows. Facilitator of innate immune signaling that acts as a sensor of cytosolic DNA from bacteria and viruses and promotes low production of type I interferon (IFN-alpha and IFN-beta). Compared to other mammals, STING1-dependent type I interferon induction is strongly reduced in bats, suggesting that the cGAS-STING pathway promotes a limited inflammatory response. Innate immune response is triggered in response to non-CpG double-stranded DNA from viruses and bacteria delivered to the cytoplasm. Acts by binding cyclic dinucleotides: recognizes and binds cyclic di-GMP (c-di-GMP), a second messenger produced by bacteria, cyclic UMP-AMP (2',3'-cUAMP), and cyclic GMP-AMP (cGAMP), a messenger produced by CGAS in response to DNA virus in the cytosol. Upon binding to c-di-GMP, cUAMP or cGAMP, STING1 oligomerizes, translocates from the endoplasmic reticulum and is phosphorylated by TBK1 on the pLxIS motif, leading to recruitment and subsequent activation of the transcription factor IRF3 to induce expression of type I interferon and exert a potent anti-viral state. In addition to promote the production of type I interferons, plays a direct role in autophagy. Following cGAMP-binding, STING1 buds from the endoplasmic reticulum into COPII vesicles, which then form the endoplasmic reticulum-Golgi intermediate compartment (ERGIC). The ERGIC serves as the membrane source for WIPI2 recruitment and LC3 lipidation, leading to formation of autophagosomes that target cytosolic DNA or DNA viruses for degradation by the lysosome. Promotes autophagy by acting as a proton channel that directs proton efflux from the Golgi to facilitate MAP1LC3B/LC3B lipidation. The autophagy- and interferon-inducing activities can be uncoupled and autophagy induction is independent of TBK1 phosphorylation. In Eidolon helvum (Straw-colored fruit bat), this protein is Stimulator of interferon genes protein.